A 1225-amino-acid chain; its full sequence is ATP-dependent helicase/nuclease subunit A (1225 aa).

The region spanning 11-478 is the UvrD-like helicase ATP-binding domain; sequence AQWTDAQWKS…IDLSKNFRSR (468 aa). 32 to 39 contributes to the ATP binding site; it reads AAAGSGKT. The region spanning 479-790 is the UvrD-like helicase C-terminal domain; the sequence is KEVLATTNYL…RMMTVHSSKG (312 aa). The segment covering 999–1014 has biased composition (basic and acidic residues); it reads EKPSKQSVSELKRQLE. Residues 999–1018 form a disordered region; sequence EKPSKQSVSELKRQLETEES.

It belongs to the helicase family. AddA subfamily. Heterodimer of AddA and AddB/RexB. The cofactor is Mg(2+).

The catalysed reaction is Couples ATP hydrolysis with the unwinding of duplex DNA by translocating in the 3'-5' direction.. It catalyses the reaction ATP + H2O = ADP + phosphate + H(+). In terms of biological role, the heterodimer acts as both an ATP-dependent DNA helicase and an ATP-dependent, dual-direction single-stranded exonuclease. Recognizes the chi site generating a DNA molecule suitable for the initiation of homologous recombination. The AddA nuclease domain is required for chi fragment generation; this subunit has the helicase and 3' -&gt; 5' nuclease activities. The protein is ATP-dependent helicase/nuclease subunit A of Staphylococcus haemolyticus (strain JCSC1435).